The primary structure comprises 198 residues: Photosystem I assembly protein Ycf4 (198 aa).

2 helical membrane passes run 35–57 (WFYN…SSYI) and 70–92 (IIFF…FSIN).

The protein belongs to the Ycf4 family.

Its subcellular location is the plastid. It is found in the chloroplast thylakoid membrane. Its function is as follows. Seems to be required for the assembly of the photosystem I complex. The chain is Photosystem I assembly protein Ycf4 from Euglena gracilis.